We begin with the raw amino-acid sequence, 329 residues long: Flotillin-like protein FloA (329 aa).

2 helical membrane passes run 4 to 24 and 27 to 47; these read FIPF…ILSF and VGLW…TLVG.

Belongs to the flotillin-like FloA family. Homooligomerizes.

The protein resides in the cell membrane. Its subcellular location is the membrane raft. Functionally, found in functional membrane microdomains (FMM) that may be equivalent to eukaryotic membrane rafts. FMMs are highly dynamic and increase in number as cells age. Flotillins are thought to be important factors in membrane fluidity. In Alkaliphilus metalliredigens (strain QYMF), this protein is Flotillin-like protein FloA.